A 439-amino-acid chain; its full sequence is Forkhead box protein J1-A (439 aa).

The segment at residues 124-218 (KPPYSYATLI…INGAMKKRRL (95 aa)) is a DNA-binding region (fork-head). Residues 273 to 293 (EHGWNSISDGKSHKRKQPLPK) are disordered. The segment covering 284–293 (SHKRKQPLPK) has biased composition (basic residues).

It belongs to the FOXJ1 family. In terms of tissue distribution, expressed in two independent areas of stage 10-11 embryos; in the dorsal blastopore lip (Spemann organizer) and shortly after in the ectodermal cells of the animal cap. As development proceeds, cells of the animal cap contribute to the epidermis and show a spotty pattern, which suggests expression in ciliated epidermal cells. Distribution of these cells is uniform in the trunk area of the embryo but more random in the head, being practically absent in the cement gland and olfactory placode. The spotted pattern becomes more dispersed as embryos grow in size. Due to cell movements during gastrulation, expression in the dorsal lip becomes located in the dorsal midline with expression restricted to the neuroectoderm. Expressed transiently in cells of the newly formed neural floor plate in the tail of older tadpoles.

It is found in the nucleus. Functionally, key transcription factor required for motile ciliogenesis. Activates genes essential for motile cilia formation and function. Required for ciliogenesis in multiciliated cells. This is Forkhead box protein J1-A (foxj1-a) from Xenopus laevis (African clawed frog).